The primary structure comprises 340 residues: GTP 3',8-cyclase (340 aa).

A Radical SAM core domain is found at 8-227 (KLGRPIRDLR…TMIEQHFEID (220 aa)). Arg17 is a binding site for GTP. 2 residues coordinate [4Fe-4S] cluster: Cys24 and Cys28. S-adenosyl-L-methionine is bound at residue Tyr30. Cys31 lines the [4Fe-4S] cluster pocket. Arg71 provides a ligand contact to GTP. Gly75 is an S-adenosyl-L-methionine binding site. Thr102 is a binding site for GTP. Ser126 contacts S-adenosyl-L-methionine. Lys163 contacts GTP. S-adenosyl-L-methionine is bound at residue Met197. The [4Fe-4S] cluster site is built by Cys261 and Cys264. 266 to 268 (RAR) serves as a coordination point for GTP. Cys278 serves as a coordination point for [4Fe-4S] cluster.

Belongs to the radical SAM superfamily. MoaA family. In terms of assembly, monomer and homodimer. Requires [4Fe-4S] cluster as cofactor.

The enzyme catalyses GTP + AH2 + S-adenosyl-L-methionine = (8S)-3',8-cyclo-7,8-dihydroguanosine 5'-triphosphate + 5'-deoxyadenosine + L-methionine + A + H(+). The protein operates within cofactor biosynthesis; molybdopterin biosynthesis. In terms of biological role, catalyzes the cyclization of GTP to (8S)-3',8-cyclo-7,8-dihydroguanosine 5'-triphosphate. This Staphylococcus aureus (strain Mu3 / ATCC 700698) protein is GTP 3',8-cyclase.